Consider the following 122-residue polypeptide: Large ribosomal subunit protein uL14 (122 aa).

Belongs to the universal ribosomal protein uL14 family. In terms of assembly, part of the 50S ribosomal subunit. Forms a cluster with proteins L3 and L19. In the 70S ribosome, L14 and L19 interact and together make contacts with the 16S rRNA in bridges B5 and B8.

Functionally, binds to 23S rRNA. Forms part of two intersubunit bridges in the 70S ribosome. This chain is Large ribosomal subunit protein uL14, found in Sinorhizobium fredii (strain NBRC 101917 / NGR234).